A 258-amino-acid polypeptide reads, in one-letter code: Cyclohexa-1,5-dienecarbonyl-CoA hydratase (258 aa).

The protein belongs to the enoyl-CoA hydratase/isomerase family.

The catalysed reaction is cyclohexa-1,5-diene-1-carbonyl-CoA + H2O = 6-hydroxycyclohex-1-ene-1-carbonyl-CoA. Its pathway is aromatic compound metabolism; benzoyl-CoA degradation. In terms of biological role, catalyzes the hydration of cyclohexa-1,5-diene-1-carboxyl-CoA. In Thauera aromatica, this protein is Cyclohexa-1,5-dienecarbonyl-CoA hydratase (dch).